We begin with the raw amino-acid sequence, 307 residues long: Aspartate carbamoyltransferase catalytic subunit (307 aa).

Arginine 54 and threonine 55 together coordinate carbamoyl phosphate. Lysine 83 contacts L-aspartate. Arginine 104, histidine 132, and glutamine 135 together coordinate carbamoyl phosphate. L-aspartate contacts are provided by arginine 165 and arginine 228. Carbamoyl phosphate is bound by residues leucine 267 and proline 268.

It belongs to the aspartate/ornithine carbamoyltransferase superfamily. ATCase family. As to quaternary structure, heterododecamer (2C3:3R2) of six catalytic PyrB chains organized as two trimers (C3), and six regulatory PyrI chains organized as three dimers (R2).

It carries out the reaction carbamoyl phosphate + L-aspartate = N-carbamoyl-L-aspartate + phosphate + H(+). It participates in pyrimidine metabolism; UMP biosynthesis via de novo pathway; (S)-dihydroorotate from bicarbonate: step 2/3. In terms of biological role, catalyzes the condensation of carbamoyl phosphate and aspartate to form carbamoyl aspartate and inorganic phosphate, the committed step in the de novo pyrimidine nucleotide biosynthesis pathway. This chain is Aspartate carbamoyltransferase catalytic subunit, found in Clostridium botulinum (strain Alaska E43 / Type E3).